An 80-amino-acid chain; its full sequence is D-alanyl carrier protein 1 (80 aa).

A Carrier domain is found at 1–80; the sequence is MTMDDTKATV…KIVAKVENLQ (80 aa). The residue at position 38 (S38) is an O-(pantetheine 4'-phosphoryl)serine.

It belongs to the DltC family. In terms of processing, 4'-phosphopantetheine is transferred from CoA to a specific serine of apo-DCP.

The protein localises to the cytoplasm. It functions in the pathway cell wall biogenesis; lipoteichoic acid biosynthesis. Carrier protein involved in the D-alanylation of lipoteichoic acid (LTA). The loading of thioester-linked D-alanine onto DltC is catalyzed by D-alanine--D-alanyl carrier protein ligase DltA. The DltC-carried D-alanyl group is further transferred to cell membrane phosphatidylglycerol (PG) by forming an ester bond, probably catalyzed by DltD. D-alanylation of LTA plays an important role in modulating the properties of the cell wall in Gram-positive bacteria, influencing the net charge of the cell wall. This Lactiplantibacillus plantarum (strain ATCC BAA-793 / NCIMB 8826 / WCFS1) (Lactobacillus plantarum) protein is D-alanyl carrier protein 1.